The primary structure comprises 651 residues: Protein cueball (651 aa).

Positions 1–21 (MILRLFILLSIITVYLQLSVG) are cleaved as a signal peptide. Residues 22-540 (IQQQFEFAIT…VCLAPNAWTG (519 aa)) lie on the Extracellular side of the membrane. Residues N77, N102, and N114 are each glycosylated (N-linked (GlcNAc...) asparagine). LDL-receptor class B repeat units follow at residues 115 to 162 (RTIY…DICG), 163 to 207 (RKLY…DQGA), and 208 to 253 (KRIF…TRNA). N-linked (GlcNAc...) asparagine glycosylation is present at N183. Residues 290–311 (VEGEEGTGAMDDNDIWPVGDFE) are disordered. N324 is a glycosylation site (N-linked (GlcNAc...) asparagine). EGF-like domains are found at residues 374 to 408 (QLDE…TRCE), 409 to 440 (TNEC…YSGE), and 443 to 480 (EVKK…LRCE). Intrachain disulfides connect C383-C396, C398-C407, C412-C421, C416-C431, C447-C457, C451-C468, and C470-C479. N-linked (GlcNAc...) asparagine glycosylation is found at N482 and N499. Residues 541 to 561 (SVLMPLMISLILILLLLTIFI) form a helical membrane-spanning segment. Topologically, residues 562-651 (HGLRRLYKPK…LIHNMEDDLY (90 aa)) are cytoplasmic.

Belongs to the cueball family.

It is found in the cell membrane. Functionally, has a role in spermatogenesis and oogenesis. The chain is Protein cueball from Drosophila willistoni (Fruit fly).